Consider the following 666-residue polypeptide: Endogenous retrovirus group K member 19 Gag polyprotein (666 aa).

Gly-2 is lipidated: N-myristoyl glycine. 2 disordered regions span residues 170 to 189 (LVGP…AGQV) and 223 to 264 (PLES…GSEL). Pro residues predominate over residues 232–247 (GMPPAPQGRAPYPQPP). CCHC-type zinc fingers lie at residues 544 to 561 (GKCY…NCPV) and 580 to 597 (DLCP…QCRS). The interval 598–640 (KFDKNGQPLSGNEQRGQPQAPQQTGAFPIQPFVPHGFQGQQPP) is disordered. Positions 604-622 (QPLSGNEQRGQPQAPQQTG) are enriched in polar residues.

The protein belongs to the beta type-B retroviral Gag protein family. HERV class-II K(HML-2) gag subfamily. Post-translationally, myristoylation is essential for retroviral assembly. Alteration of the glycine residue leads to a block in the budding of particles and an accumulation of Gag inside the cell. In terms of processing, specific enzymatic cleavages may yield mature proteins.

The protein localises to the cell membrane. The products of the Gag polyproteins of infectious retroviruses perform highly complex orchestrated tasks during the assembly, budding, maturation, and infection stages of the viral replication cycle. During viral assembly, the proteins form membrane associations and self-associations that ultimately result in budding of an immature virion from the infected cell. Gag precursors also function during viral assembly to selectively bind and package two plus strands of genomic RNA. Endogenous Gag proteins may have kept, lost or modified their original function during evolution. The protein is Endogenous retrovirus group K member 19 Gag polyprotein (ERVK-19) of Homo sapiens (Human).